The sequence spans 351 residues: Photosystem II D2 protein (351 aa).

A helical membrane pass occupies residues 39 to 59 (CAYMAIGGWLTGTTFATSWYT). Position 116 (His116) interacts with chlorophyll a. The helical transmembrane segment at 123–139 (GFMLRQFEIARLVGVRP) threads the bilayer. Pheophytin a is bound by residues Gln128 and Asn141. A helical transmembrane segment spans residues 151–164 (LFVSVFLIYPLGQS). His196 is a binding site for chlorophyll a. Residues 206-226 (GALLCAIHGATVENTLFEDGD) form a helical membrane-spanning segment. A plastoquinone-binding residues include His213 and Phe260. Fe cation is bound at residue His213. His267 contacts Fe cation. The helical transmembrane segment at 277-293 (GLWMSAIGVVGLALNLR) threads the bilayer.

Belongs to the reaction center PufL/M/PsbA/D family. In terms of assembly, PSII is composed of 1 copy each of membrane proteins PsbA, PsbB, PsbC, PsbD, PsbE, PsbF, PsbH, PsbI, PsbJ, PsbK, PsbL, PsbM, PsbT, PsbX, PsbY, PsbZ, Psb30/Ycf12, peripheral proteins PsbO, CyanoQ (PsbQ), PsbU, PsbV and a large number of cofactors. It forms dimeric complexes. The cofactor is The D1/D2 heterodimer binds P680, chlorophylls that are the primary electron donor of PSII, and subsequent electron acceptors. It shares a non-heme iron and each subunit binds pheophytin, quinone, additional chlorophylls, carotenoids and lipids. There is also a Cl(-1) ion associated with D1 and D2, which is required for oxygen evolution. The PSII complex binds additional chlorophylls, carotenoids and specific lipids..

The protein localises to the cellular thylakoid membrane. The enzyme catalyses 2 a plastoquinone + 4 hnu + 2 H2O = 2 a plastoquinol + O2. Its function is as follows. Photosystem II (PSII) is a light-driven water:plastoquinone oxidoreductase that uses light energy to abstract electrons from H(2)O, generating O(2) and a proton gradient subsequently used for ATP formation. It consists of a core antenna complex that captures photons, and an electron transfer chain that converts photonic excitation into a charge separation. The D1/D2 (PsbA/PsbD) reaction center heterodimer binds P680, the primary electron donor of PSII as well as several subsequent electron acceptors. D2 is needed for assembly of a stable PSII complex. The protein is Photosystem II D2 protein of Prochlorothrix hollandica.